Reading from the N-terminus, the 520-residue chain is Putative cytochrome P450 CYP13A3 (520 aa).

C464 contacts heme.

It belongs to the cytochrome P450 family. It depends on heme as a cofactor.

Cytochromes P450 are a group of heme-thiolate monooxygenases. They oxidize a variety of structurally unrelated compounds, including steroids, fatty acids, and xenobiotics. This is Putative cytochrome P450 CYP13A3 (cyp-13A3) from Caenorhabditis elegans.